A 103-amino-acid chain; its full sequence is ATP synthase F(0) complex subunit g, mitochondrial (103 aa).

Alanine 2 carries the N-acetylalanine modification. Residues lysine 11, lysine 24, lysine 35, and lysine 54 each carry the N6-acetyllysine modification.

As to quaternary structure, component of the ATP synthase complex composed at least of ATP5F1A/subunit alpha, ATP5F1B/subunit beta, ATP5MC1/subunit c (homooctomer), MT-ATP6/subunit a, MT-ATP8/subunit 8, ATP5ME/subunit e, ATP5MF/subunit f, ATP5MG/subunit g, ATP5MK/subunit k, ATP5MJ/subunit j, ATP5F1C/subunit gamma, ATP5F1D/subunit delta, ATP5F1E/subunit epsilon, ATP5PF/subunit F6, ATP5PB/subunit b, ATP5PD/subunit d, ATP5PO/subunit OSCP. ATP synthase complex consists of a soluble F(1) head domain (subunits alpha(3) and beta(3)) - the catalytic core - and a membrane F(0) domain - the membrane proton channel (subunits c, a, 8, e, f, g, k and j). These two domains are linked by a central stalk (subunits gamma, delta, and epsilon) rotating inside the F1 region and a stationary peripheral stalk (subunits F6, b, d, and OSCP).

It is found in the mitochondrion. The protein resides in the mitochondrion inner membrane. In terms of biological role, subunit g, of the mitochondrial membrane ATP synthase complex (F(1)F(0) ATP synthase or Complex V) that produces ATP from ADP in the presence of a proton gradient across the membrane which is generated by electron transport complexes of the respiratory chain. ATP synthase complex consist of a soluble F(1) head domain - the catalytic core - and a membrane F(1) domain - the membrane proton channel. These two domains are linked by a central stalk rotating inside the F(1) region and a stationary peripheral stalk. During catalysis, ATP synthesis in the catalytic domain of F(1) is coupled via a rotary mechanism of the central stalk subunits to proton translocation. In vivo, can only synthesize ATP although its ATP hydrolase activity can be activated artificially in vitro. Part of the complex F(0) domain. This chain is ATP synthase F(0) complex subunit g, mitochondrial, found in Bos taurus (Bovine).